Consider the following 359-residue polypeptide: Protein disulfide-isomerase C17H9.14c (359 aa).

Residues 1 to 19 (MRLPLLSFVIFALFALVFA) form the signal peptide. 2 consecutive Thioredoxin domains span residues 20–130 (SGVV…EKTG) and 134–250 (RKIV…KKSG). Catalysis depends on nucleophile residues Cys51 and Cys54. 2 disulfides stabilise this stretch: Cys51/Cys54 and Cys170/Cys173.

The protein belongs to the protein disulfide isomerase family.

The enzyme catalyses Catalyzes the rearrangement of -S-S- bonds in proteins.. In terms of biological role, participates in the folding of proteins containing disulfide bonds, may be involved in glycosylation, prolyl hydroxylation and triglyceride transfer. This Schizosaccharomyces pombe (strain 972 / ATCC 24843) (Fission yeast) protein is Protein disulfide-isomerase C17H9.14c.